The following is a 517-amino-acid chain: Golgi-associated kinase 1B (517 aa).

Topologically, residues 1 to 36 are cytoplasmic; sequence MTCPDKPGQLVNWFVCSLCAPRVCKLWSSRRPRTRR. Residues 37–56 traverse the membrane as a helical; Signal-anchor for type II membrane protein segment; the sequence is NLLLGTACAIYLGFLVSQVG. Residues 57-517 lie on the Extracellular side of the membrane; the sequence is RGSFQHGQAT…HGARVLPMNE (461 aa). N-linked (GlcNAc...) asparagine glycosylation is found at asparagine 98 and asparagine 287.

It belongs to the GASK family.

Its subcellular location is the golgi apparatus membrane. The chain is Golgi-associated kinase 1B from Mus musculus (Mouse).